Consider the following 1068-residue polypeptide: MPRNNDIKKVLVIGSGPIVIGQAAEFDYAGTQACRSLKEEGIEVCLVNSNPATIMTDKQIADQVYIEPLTLESLKEIIIKEKPDSILPTLGGQAGLNLGMELAECGFLDEQGVKLIGTTAETIFKAEDRQAFKDTMEKIGEPIAASQVVKNIEDGIAFTNKIGYPVVLRPAFTLGGSGGGIAHDEQELIDILSNGLRLSRVGEVLVERCIAGWKEIEYEVMRDANGNCITVCNMENIDPVGVHTGDSIVVAPSQTLGDKEYQMLRTSALNIINELQITGGCNVQYALNPDSFEYCVIEVNPRVSRSSALASKATGYPIAKVTAKIALGYHLDEIKNAITQKTYASFEPMLDYCVVKIPRLPFDKFLTAKRTLTTQMKATGEVMSICNNFEGALMKAIRSLEQHVDSLMSYDFTGLTDDELEKQLAVVDDRRIWVIAEALRRGVKYEHIHEITKIDLWFIDKIAILVEMENRLKTEELTVDLLKEAKRIEFPDNVISQLTDIDEADIKKMRYDNGIVAAYKMVDTCAAEFEAETPYYYSVFGSENEAAETNPQKKVLVLGSGPIRIGQGVEFDYCSVHCTWSFAKEGWETIIVNNNPETVSTDFDIADKLYFEPLTAEDVESIVNIEKPDGAVVQFGGQTAIKLTEALMKMGVKILGTKAEDVDAAEDRELFDEILQKTGIPRAAGGTVFTAEEAKKVANEIGYPVLVRPSYVLGGQGMKIAWNDDEIEEFIGIINTITQDHPILVDKYLMGKEIEVDAICDGTDILIPGIMEHIERTGVHSGDSISVYPAHTISEKAKETLVEYTKRLAQALHVVGMINIQFIDMDDNIYVIEVNPRSSRTVPYISKVTGIPIVDLAARIIMGETIKGMGYTPGLAPTADYIAIKMPVFSFEKLRGAEISLGPEMKSTGECLGIDKTFNGALYKAFEGAGVELPKYKQMIMTVKDADKPEAVGVAKRFEKLGYKIYATRSTAKYLQEHGVNALRVNKISQESPNVMDLILGHKIDLVIDTPTQGNGDKTRDGFLIRRNAIETGVYCITAMDTANALAHALETASDKKTPVDIATVKNL.

Residues 1–401 (MPRNNDIKKV…ALMKAIRSLE (401 aa)) are carboxyphosphate synthetic domain. ATP-binding residues include R129, R169, G175, G176, R208, I210, E215, G241, V242, H243, Q284, and E298. The ATP-grasp 1 domain maps to 133-327 (KDTMEKIGEP…IAKVTAKIAL (195 aa)). Mg(2+) is bound by residues Q284, E298, and N300. Residues Q284, E298, and N300 each coordinate Mn(2+). The tract at residues 402–546 (QHVDSLMSYD…YSVFGSENEA (145 aa)) is oligomerization domain. Positions 547–930 (AETNPQKKVL…ALYKAFEGAG (384 aa)) are carbamoyl phosphate synthetic domain. In terms of domain architecture, ATP-grasp 2 spans 672–862 (DEILQKTGIP…IVDLAARIIM (191 aa)). ATP is bound by residues R708, K747, L749, E753, G778, V779, H780, S781, Q821, and E833. The Mg(2+) site is built by Q821, E833, and N835. 3 residues coordinate Mn(2+): Q821, E833, and N835. The 138-residue stretch at 931-1068 (VELPKYKQMI…PVDIATVKNL (138 aa)) folds into the MGS-like domain. The segment at 931–1068 (VELPKYKQMI…PVDIATVKNL (138 aa)) is allosteric domain.

It belongs to the CarB family. Composed of two chains; the small (or glutamine) chain promotes the hydrolysis of glutamine to ammonia, which is used by the large (or ammonia) chain to synthesize carbamoyl phosphate. Tetramer of heterodimers (alpha,beta)4. Mg(2+) serves as cofactor. The cofactor is Mn(2+).

It catalyses the reaction hydrogencarbonate + L-glutamine + 2 ATP + H2O = carbamoyl phosphate + L-glutamate + 2 ADP + phosphate + 2 H(+). It carries out the reaction hydrogencarbonate + NH4(+) + 2 ATP = carbamoyl phosphate + 2 ADP + phosphate + 2 H(+). It functions in the pathway amino-acid biosynthesis; L-arginine biosynthesis; carbamoyl phosphate from bicarbonate: step 1/1. It participates in pyrimidine metabolism; UMP biosynthesis via de novo pathway; (S)-dihydroorotate from bicarbonate: step 1/3. In terms of biological role, large subunit of the glutamine-dependent carbamoyl phosphate synthetase (CPSase). CPSase catalyzes the formation of carbamoyl phosphate from the ammonia moiety of glutamine, carbonate, and phosphate donated by ATP, constituting the first step of 2 biosynthetic pathways, one leading to arginine and/or urea and the other to pyrimidine nucleotides. The large subunit (synthetase) binds the substrates ammonia (free or transferred from glutamine from the small subunit), hydrogencarbonate and ATP and carries out an ATP-coupled ligase reaction, activating hydrogencarbonate by forming carboxy phosphate which reacts with ammonia to form carbamoyl phosphate. This chain is Carbamoyl phosphate synthase large chain, found in Agathobacter rectalis (strain ATCC 33656 / DSM 3377 / JCM 17463 / KCTC 5835 / VPI 0990) (Eubacterium rectale).